The chain runs to 187 residues: uncharacterized protein (187 aa).

Residues 26–157 (NRHAAVLLPI…YLDVSRRGQQ (132 aa)) enclose the Nudix hydrolase domain. Positions 64-86 (GVADPKDKSIIATALREAEEEVN) match the Nudix box motif. Residues Glu-80 and Glu-84 each coordinate Mg(2+).

This sequence belongs to the Nudix hydrolase family. PCD1 subfamily. It depends on Mn(2+) as a cofactor. Mg(2+) is required as a cofactor.

In terms of biological role, probably mediates the hydrolysis of some nucleoside diphosphate derivatives. This is an uncharacterized protein from Photorhabdus laumondii subsp. laumondii (strain DSM 15139 / CIP 105565 / TT01) (Photorhabdus luminescens subsp. laumondii).